Here is a 356-residue protein sequence, read N- to C-terminus: Retinoic acid-induced protein 3 (356 aa).

Residues 1 to 35 (MTTPTTAPSGCRSDLDSRYHRLCDLAEGWGIALET) lie on the Extracellular side of the membrane. A helical transmembrane segment spans residues 36–56 (LAAVGAVATVACMFALVFLIC). The Cytoplasmic portion of the chain corresponds to 57–68 (KVQDSNKRKMLP). The helical transmembrane segment at 69–89 (AQFLFLLGVLGVFGLTFAFII) threads the bilayer. Over 90–101 (KLDGATGPTRFF) the chain is Extracellular. The chain crosses the membrane as a helical span at residues 102–122 (LFGVLFAICFSCLLAHAFNLI). Topologically, residues 123 to 131 (KLVRGRKPL) are cytoplasmic. Residues 132-152 (SWLVILSLAVGFSLVQDVIAI) form a helical membrane-spanning segment. Over 153 to 178 (EYLVLTMNRTNVNVFSELPAPRRNED) the chain is Extracellular. Asn-160 is a glycosylation site (N-linked (GlcNAc...) asparagine). Residues 179-199 (FVMLLIYVLVLMVLTFFTSFL) traverse the membrane as a helical segment. The Cytoplasmic segment spans residues 200–214 (VFCGSFSGWKRHGFH). A helical transmembrane segment spans residues 215 to 235 (ICFTSFLSIAIWVAWIVLLLI). Residues 236–244 (PDIDRKWDD) lie on the Extracellular side of the membrane. The chain crosses the membrane as a helical span at residues 245-265 (TILSTALVANGWVFLAFYILP). The Cytoplasmic segment spans residues 266 to 356 (EFRQLPRQRS…NDYEGRKGDS (91 aa)). Ser-303 is subject to Phosphoserine. Phosphotyrosine occurs at positions 318 and 321. The interval 336 to 356 (IPRAQAPASPYNDYEGRKGDS) is disordered. Ser-344 carries the phosphoserine modification. Phosphotyrosine occurs at positions 346 and 349.

The protein belongs to the G-protein coupled receptor 3 family. As to quaternary structure, interacts (via its transmembrane domain) with EGFR. Phosphorylated in two conserved double-tyrosine motifs, Tyr 318/Tyr-321 and Tyr-346/Tyr-349 by EGFR. Tyr-318 and Tyr-321 are the preferred residues responsible for EGFR-mediated GPRC5A phosphorylation. Expressed predominantly in normal fetal and adult lung. Almost undetectable or expressed at very low levels in other tissues.

Its subcellular location is the cell membrane. Orphan receptor. Could be involved in modulating differentiation and maintaining homeostasis of epithelial cells. This retinoic acid-inducible GPCR provides evidence for a possible interaction between retinoid and G-protein signaling pathways. Functions as a negative modulator of EGFR signaling. Acts as a lung tumor suppressor. The protein is Retinoic acid-induced protein 3 (Gprc5a) of Mus musculus (Mouse).